We begin with the raw amino-acid sequence, 100 residues long: Small ribosomal subunit protein uS14c (100 aa).

This sequence belongs to the universal ribosomal protein uS14 family. In terms of assembly, part of the 30S ribosomal subunit.

It is found in the plastid. It localises to the chloroplast. In terms of biological role, binds 16S rRNA, required for the assembly of 30S particles. This Oedogonium cardiacum (Filamentous green alga) protein is Small ribosomal subunit protein uS14c.